The following is a 624-amino-acid chain: Chaperone protein HtpG (624 aa).

The segment at 1-336 (MKGQETRGFQ…SNDLPLNVSR (336 aa)) is a; substrate-binding. Residues 337-552 (EILQDSSVTR…ADEMSTQMAK (216 aa)) are b. A c region spans residues 553–624 (LFAAAGQAAP…IRRMNQLLAS (72 aa)).

It belongs to the heat shock protein 90 family. As to quaternary structure, homodimer.

The protein resides in the cytoplasm. Molecular chaperone. Has ATPase activity. This Klebsiella pneumoniae subsp. pneumoniae (strain ATCC 700721 / MGH 78578) protein is Chaperone protein HtpG.